The primary structure comprises 160 residues: Protein YpjC (160 aa).

The polypeptide is Protein YpjC (ypjC) (Escherichia coli (strain K12)).